The sequence spans 335 residues: Probable nicotianamine synthase 2 (335 aa).

Belongs to the nicotianamine synthase (NAS)-like family.

It carries out the reaction 3 S-adenosyl-L-methionine = nicotianamine + 3 S-methyl-5'-thioadenosine + 3 H(+). Synthesizes nicotianamine, a polyamine that is the first intermediate in the synthesis of the phytosiderophores of the mugineic acid type found in gramineae which serves as a sensor for the physiological iron status within the plant, and/or might be involved in the transport of iron. This Hordeum vulgare (Barley) protein is Probable nicotianamine synthase 2 (NAS2).